The following is a 119-amino-acid chain: Large ribosomal subunit protein bL17 (119 aa).

This sequence belongs to the bacterial ribosomal protein bL17 family. As to quaternary structure, part of the 50S ribosomal subunit. Contacts protein L32.

The chain is Large ribosomal subunit protein bL17 from Ureaplasma parvum serovar 3 (strain ATCC 27815 / 27 / NCTC 11736).